The primary structure comprises 741 residues: Subtilisin-like protease SBT4.4 (741 aa).

Positions 1 to 24 (MAKGTTFIFLFSSLLVLSLSSVSA) are cleaved as a signal peptide. Positions 25–112 (DKDDHGDQQV…VFPSRKLKLQ (88 aa)) are cleaved as a propeptide — activation peptide. An Inhibitor I9 domain is found at 34 to 111 (VYIVYLGSLP…SVFPSRKLKL (78 aa)). Residues 116–589 (SWNFMGLKEG…SGHVDPIDAI (474 aa)) enclose the Peptidase S8 domain. Asp-144 functions as the Charge relay system in the catalytic mechanism. N-linked (GlcNAc...) asparagine glycans are attached at residues Asn-175 and Asn-195. His-204 serves as the catalytic Charge relay system. N-linked (GlcNAc...) asparagine glycosylation is found at Asn-227 and Asn-357. The region spanning 359–445 (TNYPLVYGKS…LSNDDYKSLV (87 aa)) is the PA domain. N-linked (GlcNAc...) asparagine glycosylation is present at Asn-449. The Charge relay system role is filled by Ser-528. Residues Asn-565, Asn-610, Asn-623, and Asn-654 are each glycosylated (N-linked (GlcNAc...) asparagine).

It belongs to the peptidase S8 family. Post-translationally, the C-terminal propeptide is autocleaved.

It is found in the secreted. This Arabidopsis thaliana (Mouse-ear cress) protein is Subtilisin-like protease SBT4.4.